Consider the following 409-residue polypeptide: 8-amino-7-oxononanoate synthase (409 aa).

Position 20 (Arg20) interacts with substrate. 116 to 117 contacts pyridoxal 5'-phosphate; the sequence is GY. Position 141 (His141) interacts with substrate. Positions 187, 215, and 243 each coordinate pyridoxal 5'-phosphate. Lys246 carries the N6-(pyridoxal phosphate)lysine modification. Thr369 serves as a coordination point for substrate.

The protein belongs to the class-II pyridoxal-phosphate-dependent aminotransferase family. BioF subfamily. In terms of assembly, homodimer. The cofactor is pyridoxal 5'-phosphate.

The catalysed reaction is 6-carboxyhexanoyl-[ACP] + L-alanine + H(+) = (8S)-8-amino-7-oxononanoate + holo-[ACP] + CO2. Its pathway is cofactor biosynthesis; biotin biosynthesis. Its function is as follows. Catalyzes the decarboxylative condensation of pimeloyl-[acyl-carrier protein] and L-alanine to produce 8-amino-7-oxononanoate (AON), [acyl-carrier protein], and carbon dioxide. The sequence is that of 8-amino-7-oxononanoate synthase from Polaromonas naphthalenivorans (strain CJ2).